Here is a 419-residue protein sequence, read N- to C-terminus: Phosphoglycerate kinase (419 aa).

Substrate contacts are provided by residues 21–23 (DFN), Arg-36, 60–63 (HLGD), Arg-137, and Arg-174. ATP contacts are provided by residues Lys-225, Gly-316, Glu-347, and 376 to 379 (GGDS).

Belongs to the phosphoglycerate kinase family. As to quaternary structure, monomer.

It is found in the cytoplasm. It catalyses the reaction (2R)-3-phosphoglycerate + ATP = (2R)-3-phospho-glyceroyl phosphate + ADP. It functions in the pathway carbohydrate degradation; glycolysis; pyruvate from D-glyceraldehyde 3-phosphate: step 2/5. The polypeptide is Phosphoglycerate kinase (pgk) (Treponema pallidum (strain Nichols)).